Here is a 320-residue protein sequence, read N- to C-terminus: Sucrose operon repressor (320 aa).

The region spanning 1–57 is the HTH lacI-type domain; that stretch reads MVAKLTDVAKLAGVSPTTVSRVINRKGYLSEKTITKVQAAMKTLGYKPNNLARSLQG. The segment at residues 5–24 is a DNA-binding region (H-T-H motif); the sequence is LTDVAKLAGVSPTTVSRVIN.

Negative regulator of scrB expression. The chain is Sucrose operon repressor (scrR) from Streptococcus mutans serotype c (strain ATCC 700610 / UA159).